A 307-amino-acid polypeptide reads, in one-letter code: Transaldolase (307 aa).

Lysine 125 (schiff-base intermediate with substrate) is an active-site residue.

The protein belongs to the transaldolase family. Type 1 subfamily.

The protein resides in the cytoplasm. It carries out the reaction D-sedoheptulose 7-phosphate + D-glyceraldehyde 3-phosphate = D-erythrose 4-phosphate + beta-D-fructose 6-phosphate. It participates in carbohydrate degradation; pentose phosphate pathway; D-glyceraldehyde 3-phosphate and beta-D-fructose 6-phosphate from D-ribose 5-phosphate and D-xylulose 5-phosphate (non-oxidative stage): step 2/3. In terms of biological role, transaldolase is important for the balance of metabolites in the pentose-phosphate pathway. The polypeptide is Transaldolase (Pseudomonas aeruginosa (strain ATCC 15692 / DSM 22644 / CIP 104116 / JCM 14847 / LMG 12228 / 1C / PRS 101 / PAO1)).